The primary structure comprises 95 residues: Pyrimidine/purine nucleoside phosphorylase (95 aa).

It belongs to the nucleoside phosphorylase PpnP family.

The enzyme catalyses a purine D-ribonucleoside + phosphate = a purine nucleobase + alpha-D-ribose 1-phosphate. It carries out the reaction adenosine + phosphate = alpha-D-ribose 1-phosphate + adenine. It catalyses the reaction cytidine + phosphate = cytosine + alpha-D-ribose 1-phosphate. The catalysed reaction is guanosine + phosphate = alpha-D-ribose 1-phosphate + guanine. The enzyme catalyses inosine + phosphate = alpha-D-ribose 1-phosphate + hypoxanthine. It carries out the reaction thymidine + phosphate = 2-deoxy-alpha-D-ribose 1-phosphate + thymine. It catalyses the reaction uridine + phosphate = alpha-D-ribose 1-phosphate + uracil. The catalysed reaction is xanthosine + phosphate = alpha-D-ribose 1-phosphate + xanthine. Functionally, catalyzes the phosphorolysis of diverse nucleosides, yielding D-ribose 1-phosphate and the respective free bases. Can use uridine, adenosine, guanosine, cytidine, thymidine, inosine and xanthosine as substrates. Also catalyzes the reverse reactions. The chain is Pyrimidine/purine nucleoside phosphorylase from Vibrio cholerae serotype O1 (strain ATCC 39315 / El Tor Inaba N16961).